Consider the following 412-residue polypeptide: 1-deoxy-D-xylulose 5-phosphate reductoisomerase (412 aa).

Threonine 5, glycine 6, serine 7, isoleucine 8, glycine 31, arginine 32, asparagine 33, and asparagine 125 together coordinate NADPH. Lysine 126 is a 1-deoxy-D-xylulose 5-phosphate binding site. Glutamate 127 contributes to the NADPH binding site. Aspartate 151 serves as a coordination point for Mn(2+). 4 residues coordinate 1-deoxy-D-xylulose 5-phosphate: serine 152, glutamate 153, serine 189, and histidine 212. Residue glutamate 153 participates in Mn(2+) binding. Residue glycine 218 coordinates NADPH. 4 residues coordinate 1-deoxy-D-xylulose 5-phosphate: serine 225, asparagine 230, lysine 231, and glutamate 234. A Mn(2+)-binding site is contributed by glutamate 234.

Belongs to the DXR family. The cofactor is Mg(2+). Mn(2+) serves as cofactor.

The enzyme catalyses 2-C-methyl-D-erythritol 4-phosphate + NADP(+) = 1-deoxy-D-xylulose 5-phosphate + NADPH + H(+). Its pathway is isoprenoid biosynthesis; isopentenyl diphosphate biosynthesis via DXP pathway; isopentenyl diphosphate from 1-deoxy-D-xylulose 5-phosphate: step 1/6. In terms of biological role, catalyzes the NADPH-dependent rearrangement and reduction of 1-deoxy-D-xylulose-5-phosphate (DXP) to 2-C-methyl-D-erythritol 4-phosphate (MEP). In Prochlorococcus marinus (strain SARG / CCMP1375 / SS120), this protein is 1-deoxy-D-xylulose 5-phosphate reductoisomerase.